The sequence spans 292 residues: Transmembrane and ubiquitin-like domain-containing protein 1 (292 aa).

The chain crosses the membrane as a helical span at residues 11-31 (VTLLFGVVFLVLVLVLAWAST). The disordered stretch occupies residues 34–143 (VEPPEHLLSP…TQPSAEDAAS (110 aa)). Basic and acidic residues predominate over residues 71–80 (VRDEDDKSEP). Residues 84–94 (AGAAGQSADGS) show a composition bias toward low complexity. A Ubiquitin-like domain is found at 149-222 (MVLRLKFLND…LHCHISQHAT (74 aa)). The next 2 helical transmembrane spans lie at 237 to 257 (VALNVGSLMVPLFVLMLSVLW) and 269 to 289 (APATASLVGITIFFSFVAFGV).

Its subcellular location is the membrane. The protein resides in the cytoplasm. The protein localises to the nucleus. Its function is as follows. May contribute to the regulation of translation during cell-cycle progression. May contribute to the regulation of cell proliferation. The membrane form is involved in sterol-regulated ubiquitination and degradation of HMG-CoA reductase HMGCR. May be involved in centrosome assembly. The polypeptide is Transmembrane and ubiquitin-like domain-containing protein 1 (tmub1) (Danio rerio (Zebrafish)).